The primary structure comprises 243 residues: Triosephosphate isomerase (243 aa).

9–11 (NWK) serves as a coordination point for substrate. The Electrophile role is filled by H96. The active-site Proton acceptor is the E165. Substrate contacts are provided by residues G171, S204, and 225–226 (GG).

Belongs to the triosephosphate isomerase family. Homodimer.

It localises to the cytoplasm. It catalyses the reaction D-glyceraldehyde 3-phosphate = dihydroxyacetone phosphate. The protein operates within carbohydrate biosynthesis; gluconeogenesis. It functions in the pathway carbohydrate degradation; glycolysis; D-glyceraldehyde 3-phosphate from glycerone phosphate: step 1/1. Involved in the gluconeogenesis. Catalyzes stereospecifically the conversion of dihydroxyacetone phosphate (DHAP) to D-glyceraldehyde-3-phosphate (G3P). This chain is Triosephosphate isomerase, found in Prochlorococcus marinus (strain SARG / CCMP1375 / SS120).